The sequence spans 147 residues: MEDDFKHLVRISRKDVDGNKTIEQALTEIKGVGISLSTTMCRTLDLDSEAQIGYIADEDVLKIEEILENPQKFNIPNWMLNRREDYETGENIHLIESDLDMTLRDDLNRMKKTRSYKGRRHEAGLPVRGQRTKSTFRNSSSVGVKRS.

The tract at residues serine 115 to serine 147 is disordered. The segment covering threonine 132–serine 147 has biased composition (polar residues).

The protein belongs to the universal ribosomal protein uS13 family. Part of the 30S ribosomal subunit. Forms a loose heterodimer with protein S19. Forms two bridges to the 50S subunit in the 70S ribosome.

Located at the top of the head of the 30S subunit, it contacts several helices of the 16S rRNA. In the 70S ribosome it contacts the 23S rRNA (bridge B1a) and protein L5 of the 50S subunit (bridge B1b), connecting the 2 subunits; these bridges are implicated in subunit movement. In Methanobrevibacter smithii (strain ATCC 35061 / DSM 861 / OCM 144 / PS), this protein is Small ribosomal subunit protein uS13.